We begin with the raw amino-acid sequence, 320 residues long: o-succinylbenzoate synthase (320 aa).

K133 serves as the catalytic Proton donor. D161, E190, and D213 together coordinate Mg(2+). K235 functions as the Proton acceptor in the catalytic mechanism.

It belongs to the mandelate racemase/muconate lactonizing enzyme family. MenC type 1 subfamily. A divalent metal cation is required as a cofactor.

The enzyme catalyses (1R,6R)-6-hydroxy-2-succinyl-cyclohexa-2,4-diene-1-carboxylate = 2-succinylbenzoate + H2O. Its pathway is quinol/quinone metabolism; 1,4-dihydroxy-2-naphthoate biosynthesis; 1,4-dihydroxy-2-naphthoate from chorismate: step 4/7. The protein operates within quinol/quinone metabolism; menaquinone biosynthesis. Functionally, converts 2-succinyl-6-hydroxy-2,4-cyclohexadiene-1-carboxylate (SHCHC) to 2-succinylbenzoate (OSB). This is o-succinylbenzoate synthase from Salmonella agona (strain SL483).